The following is a 1717-amino-acid chain: DNA-directed RNA polymerase I subunit RPA1 (1717 aa).

6 residues coordinate Zn(2+): Cys64, Cys67, Cys74, His77, Cys104, and Cys107. Residues 110 to 201 (LTCPRAAIYL…VAQFWKTHMA (92 aa)) form a clamp region. Cys205 and Cys208 together coordinate Zn(2+). The clamp stretch occupies residues 327-433 (FTNGQTVNLQ…IRQILEKKEG (107 aa)). The tract at residues 410-423 (DSEMDKLMLEKYPG) is rudder. The DNA site is built by Lys431, Arg436, and Arg443. Residues 475-549 (YPQPVTPWNV…QGTKVVCRHV (75 aa)) are involved in RRN3 binding to Pol I complex. RNA is bound at residue Arg559. Residues Asp595, Asp597, and Asp599 each coordinate Mg(2+). Asp599 serves as a coordination point for RNA. The segment at 812 to 890 (KPNADVVRQR…NEINKACMPL (79 aa)) is funnel. The bridging helix stretch occupies residues 967 to 1008 (RPPEFFFHCMAGREGLVDTAVKTSRSGYLQRCIIKHLEGLVI). Positions 1067 to 1162 (ADPQKVLGHI…SLSVWRPDIY (96 aa)) are mediates the interaction with TOP2A. The segment at 1214–1255 (PGEAVGLLAAQSIGEPSTQMTLNTFHFAGRGEMNVTLGIPRL) is trigger loop. Arg1256 is a DNA binding site. A disordered region spans residues 1372 to 1493 (RNVNSRRATQ…RRHSRPQGAE (122 aa)). The segment covering 1380-1397 (TQKDLNDTEDSGRSQREE) has biased composition (basic and acidic residues). Ser1393 is subject to Phosphoserine. Composition is skewed to acidic residues over residues 1398–1419 (ERDEEEEGNIVDAEAEEGDADA) and 1429–1450 (EEEVDYESEEEGEEEEEEEVQE). The span at 1452 to 1464 (GNIKGDGVHQGHE) shows a compositional bias: basic and acidic residues. The span at 1465–1477 (PDEEEHLGLEEEE) shows a compositional bias: acidic residues.

This sequence belongs to the RNA polymerase beta' chain family. Component of the RNA polymerase I (Pol I) complex consisting of 13 subunits: a ten-subunit catalytic core composed of POLR1A/RPA1, POLR1B/RPA2, POLR1C/RPAC1, POLR1D/RPAC2, POLR1H/RPA12, POLR2E/RPABC1, POLR2F/RPABC2, POLR2H/RPABC3, POLR2K/RPABC4 and POLR2L/RPABC5; a mobile stalk subunit POLR1F/RPA43 protruding from the core and additional subunits homologous to general transcription factors POLR1E/RPA49 and POLR1G/RPA34. Part of Pol I pre-initiation complex (PIC), in which Pol I core assembles with RRN3 and promoter-bound UTBF and SL1/TIF-IB complex. Interacts (via dock II domain) with TOP2A; this interaction may assist Pol I transcription initiation by releasing supercoils occurring during DNA unwinding. Interacts with CAVIN1; this interaction induces the dissociation of Pol I complex paused at rDNA terminator sequences. Interacts with MYO1C. Interacts with ERBB2. Interacts with DDX11. Interacts with RECQL5. Requires Mg(2+) as cofactor. Phosphorylated.

It is found in the nucleus. Its subcellular location is the nucleolus. It localises to the chromosome. It carries out the reaction RNA(n) + a ribonucleoside 5'-triphosphate = RNA(n+1) + diphosphate. Functionally, catalytic core component of RNA polymerase I (Pol I), a DNA-dependent RNA polymerase which synthesizes ribosomal RNA precursors using the four ribonucleoside triphosphates as substrates. Transcribes 47S pre-rRNAs from multicopy rRNA gene clusters, giving rise to 5.8S, 18S and 28S ribosomal RNAs. Pol I-mediated transcription cycle proceeds through transcription initiation, transcription elongation and transcription termination stages. During transcription initiation, Pol I pre-initiation complex (PIC) is recruited by the selectivity factor 1 (SL1/TIF-IB) complex bound to the core promoter that precedes an rDNA repeat unit. The PIC assembly bends the promoter favoring the formation of the transcription bubble and promoter escape. Once the polymerase has escaped from the promoter it enters the elongation phase during which RNA is actively polymerized, based on complementarity with the template DNA strand. Highly processive, assembles in structures referred to as 'Miller trees' where many elongating Pol I complexes queue and transcribe the same rDNA coding regions. At terminator sequences downstream of the rDNA gene, PTRF interacts with Pol I and halts Pol I transcription leading to the release of the RNA transcript and polymerase from the DNA. Forms Pol I active center together with the second largest subunit POLR1B/RPA2. Appends one nucleotide at a time to the 3' end of the nascent RNA, with POLR1A/RPA1 contributing a Mg(2+)-coordinating DxDGD motif, and POLR1B/RPA2 participating in the coordination of a second Mg(2+) ion and providing lysine residues believed to facilitate Watson-Crick base pairing between the incoming nucleotide and the template base. Typically, Mg(2+) ions direct a 5' nucleoside triphosphate to form a phosphodiester bond with the 3' hydroxyl of the preceding nucleotide of the nascent RNA, with the elimination of pyrophosphate. Has proofreading activity: Pauses and backtracks to allow the cleavage of a missincorporated nucleotide via POLR1H/RPA12. High Pol I processivity is associated with decreased transcription fidelity. The chain is DNA-directed RNA polymerase I subunit RPA1 from Mus musculus (Mouse).